Consider the following 189-residue polypeptide: Large ribosomal subunit protein uL6 (189 aa).

Belongs to the universal ribosomal protein uL6 family. As to quaternary structure, part of the 50S ribosomal subunit.

Its function is as follows. This protein binds to the 23S rRNA, and is important in its secondary structure. It is located near the subunit interface in the base of the L7/L12 stalk, and near the tRNA binding site of the peptidyltransferase center. The protein is Large ribosomal subunit protein uL6 of Bacteroides thetaiotaomicron (strain ATCC 29148 / DSM 2079 / JCM 5827 / CCUG 10774 / NCTC 10582 / VPI-5482 / E50).